The sequence spans 463 residues: Quinolone resistance protein NorB (463 aa).

14 helical membrane passes run 17–37 (IGIV…VNVV), 53–73 (IAVS…GGLA), 86–106 (IILN…LLLI), 107–127 (IGRL…LSII), 142–162 (YWSI…GAVA), 165–185 (LGWR…LFLI), 201–221 (FDIK…ILIT), 230–250 (SLLF…FIVL), 273–293 (TASN…NTFV), 299–319 (YSSL…LIMI), 334–354 (PMLI…LTFL), 357–377 (ILYV…LGIY), 403–423 (MASA…YAIV), and 435–455 (IALW…LLLV).

This sequence belongs to the major facilitator superfamily. TCR/Tet family.

It localises to the cell membrane. Multidrug efflux pump that acts independently of NorA and is one of the factors that confers resistance against diverse quinolones and chemical compounds. The polypeptide is Quinolone resistance protein NorB (norB) (Staphylococcus aureus (strain MSSA476)).